A 106-amino-acid polypeptide reads, in one-letter code: Met repressor (106 aa).

Belongs to the MetJ family. As to quaternary structure, homodimer.

The protein localises to the cytoplasm. Functionally, this regulatory protein, when combined with SAM (S-adenosylmethionine) represses the expression of the methionine regulon and of enzymes involved in SAM synthesis. The sequence is that of Met repressor from Vibrio atlanticus (strain LGP32) (Vibrio splendidus (strain Mel32)).